A 632-amino-acid chain; its full sequence is Probable potassium transport system protein Kup 1 (632 aa).

12 helical membrane-spanning segments follow: residues 17–37 (LFYLALGSVGVVYGDIGTSPL), 60–80 (LISLMIWALTIIVTIKYVLFL), 106–126 (TAILMLLGLMGAALFLGDAMI), 146–166 (LADYIVPISVVILALLFVVQS), 175–195 (FFGPITAVWFLVMAAAGISHI), 210–230 (AVAFLLHEGFYGIVVLGAVFL), 254–274 (WFLLVFPALTLNYLGQGALVL), 292–312 (ALLPVVILATAATIIASQAVI), 344–364 (IFVPSVNAVLFIGVIFLVLGF), 370–390 (LATAYGISVTGAMVVTSIMAF), 401–421 (LPVAVIALAPLVVLEMIFLGA), and 426–446 (IHDGGYIPIMIATAFTVVMWT).

The protein belongs to the HAK/KUP transporter (TC 2.A.72) family.

The protein resides in the cell inner membrane. It catalyses the reaction K(+)(in) + H(+)(in) = K(+)(out) + H(+)(out). In terms of biological role, transport of potassium into the cell. Likely operates as a K(+):H(+) symporter. The polypeptide is Probable potassium transport system protein Kup 1 (Rhizobium johnstonii (strain DSM 114642 / LMG 32736 / 3841) (Rhizobium leguminosarum bv. viciae)).